Consider the following 629-residue polypeptide: Dihydroxy-acid dehydratase 2 (629 aa).

Mg(2+) is bound at residue Asp82. Cys123 is a binding site for [2Fe-2S] cluster. Positions 124 and 125 each coordinate Mg(2+). N6-carboxylysine is present on Lys125. Cys197 contacts [2Fe-2S] cluster. Mg(2+) is bound at residue Glu493. The active-site Proton acceptor is Ser519. Positions 603–629 (DKGGVRRLPPDELGGPEAAFDTQTRAG) are disordered.

It belongs to the IlvD/Edd family. In terms of assembly, homodimer. [2Fe-2S] cluster is required as a cofactor. Requires Mg(2+) as cofactor.

It catalyses the reaction (2R)-2,3-dihydroxy-3-methylbutanoate = 3-methyl-2-oxobutanoate + H2O. The catalysed reaction is (2R,3R)-2,3-dihydroxy-3-methylpentanoate = (S)-3-methyl-2-oxopentanoate + H2O. It functions in the pathway amino-acid biosynthesis; L-isoleucine biosynthesis; L-isoleucine from 2-oxobutanoate: step 3/4. Its pathway is amino-acid biosynthesis; L-valine biosynthesis; L-valine from pyruvate: step 3/4. Its function is as follows. Functions in the biosynthesis of branched-chain amino acids. Catalyzes the dehydration of (2R,3R)-2,3-dihydroxy-3-methylpentanoate (2,3-dihydroxy-3-methylvalerate) into 2-oxo-3-methylpentanoate (2-oxo-3-methylvalerate) and of (2R)-2,3-dihydroxy-3-methylbutanoate (2,3-dihydroxyisovalerate) into 2-oxo-3-methylbutanoate (2-oxoisovalerate), the penultimate precursor to L-isoleucine and L-valine, respectively. The polypeptide is Dihydroxy-acid dehydratase 2 (Nocardia farcinica (strain IFM 10152)).